The sequence spans 91 residues: DNA-directed RNA polymerase subunit omega (91 aa).

It belongs to the RNA polymerase subunit omega family. The RNAP catalytic core consists of 2 alpha, 1 beta, 1 beta' and 1 omega subunit. When a sigma factor is associated with the core the holoenzyme is formed, which can initiate transcription.

The catalysed reaction is RNA(n) + a ribonucleoside 5'-triphosphate = RNA(n+1) + diphosphate. Functionally, promotes RNA polymerase assembly. Latches the N- and C-terminal regions of the beta' subunit thereby facilitating its interaction with the beta and alpha subunits. This Actinobacillus pleuropneumoniae serotype 5b (strain L20) protein is DNA-directed RNA polymerase subunit omega.